Consider the following 62-residue polypeptide: Short neurotoxin C (62 aa).

Polar residues predominate over residues 1–16 (RRCFNQQSSQPQTNKS). Residues 1–21 (RRCFNQQSSQPQTNKSCPPGE) are disordered. Disulfide bonds link Cys-3–Cys-24, Cys-17–Cys-41, Cys-43–Cys-54, and Cys-55–Cys-60.

The protein belongs to the three-finger toxin family. Short-chain subfamily. Type I alpha-neurotoxin sub-subfamily. As to expression, expressed by the venom gland.

It is found in the secreted. Binds to muscle nicotinic acetylcholine receptor (nAChR) and inhibit acetylcholine from binding to the receptor, thereby impairing neuromuscular transmission. The chain is Short neurotoxin C from Laticauda crockeri (Crocker's sea snake).